The primary structure comprises 760 residues: Complement C2 (760 aa).

Residues Met1 to Ala18 form the signal peptide. Sushi domains are found at residues Leu20–Lys90, Val92–Asn151, and Ser154–Gln212. Disulfide bonds link Cys22-Cys62, Cys49-Cys89, Cys94-Cys136, Cys122-Cys149, Cys156-Cys197, and Cys182-Cys210. N-linked (GlcNAc...) asparagine glycans are attached at residues Asn27 and Asn32. A glycan (N-linked (GlcNAc...) asparagine) is linked at Asn117. The 199-residue stretch at Asn261–Met459 folds into the VWFA domain. The MIDAS-like motif motif lies at Asp267 to Ser271. Mg(2+)-binding residues include Ser269 and Ser271. Asn297 and Asn340 each carry an N-linked (GlcNAc...) asparagine glycan. Thr344 lines the Mg(2+) pocket. Cystine bridges form between Cys470–Cys590, Cys499–Cys515, Cys593–Cys609, Cys647–Cys674, and Cys685–Cys715. Residues Gly471–Asp752 enclose the Peptidase S1 domain. Asn474 and Asn478 each carry an N-linked (GlcNAc...) asparagine glycan. Catalysis depends on charge relay system residues His514 and Asp570. A glycan (N-linked (GlcNAc...) asparagine) is linked at Asn663. The Charge relay system role is filled by Ser689.

This sequence belongs to the peptidase S1 family. In terms of assembly, serine protease component of the C3 convertase, also named C4bC2b, composed of the serine protease complement C2b and complement C4b. Serine protease component of the C5 convertase, also named C4bC2bC3b, composed of the serine protease complement C2b, complement C3b, as well as complement C4b. It depends on Mg(2+) as a cofactor. Mn(2+) is required as a cofactor. Post-translationally, cleaved and activated by different proteases depending on the complement pathway to generate complement C2a and serine protease complement C2b chains. Cleaved and activated by C1S following activation by the classical complement system. Cleaved and activated by MASP2 following activation by the lectin complement system. Cleaved and activated by GZMK following activation by the GZMK complement system.

It localises to the secreted. Its subcellular location is the cell surface. It catalyses the reaction Selective cleavage of Arg-|-Ser bond in complement component C3 alpha-chain to form C3a and C3b, and Arg-|-Xaa bond in complement component C5 alpha-chain to form C5a and C5b.. Precursor of the catalytic component of the C3 and C5 convertase complexes, which are part of the complement pathway, a cascade of proteins that leads to phagocytosis and breakdown of pathogens and signaling that strengthens the adaptive immune system. Component C2 is part of the classical, lectin and GZMK complement systems. Its function is as follows. Catalytic component of the complement C3 and C5 convertase complexes. Following complement activation, recruited to the surface of pathogens by complement C4b opsonin to form the C3 convertase, or C3b and C4b opsonins to form the C5 convertase. As part of the C3 convertase, cleaves and activate C3 into C3a anaphylatoxin and C3b opsonin, the next components of the complement pathways. As part of the C5 convertase, cleaves and activate C5 into C5a anaphylatoxin and C5b component of the membrane attack complex. The chain is Complement C2 from Mus musculus (Mouse).